A 61-amino-acid polypeptide reads, in one-letter code: Alpha-conotoxin EIIA (61 aa).

The signal sequence occupies residues 1 to 16 (MFIVFLLVVLATTVGS). The propeptide occupies 17–40 (FTLDRVLEGRNAAAIDNALDQRDP). Gln-43 carries the post-translational modification Pyrrolidone carboxylic acid. Residue Pro-45 is modified to Hydroxyproline. 2 disulfides stabilise this stretch: Cys-47-Cys-53 and Cys-48-Cys-58. Cysteine amide is present on Cys-58.

This sequence belongs to the conotoxin A superfamily. In terms of tissue distribution, expressed by the venom duct.

Its subcellular location is the secreted. Alpha-conotoxins bind to the nicotinic acetylcholine receptors (nAChR) and inhibit them. This peptide potently blocks muscular nicotinic acetylcholine receptor (CHRNA1-CHRNB1-CHRNG-CHRND), and has no effect on neuronal receptors. It is able to totally displace [125I]-Bgtx from the Torpedo receptor with a complete inhibition in the high micromolar range. It produces a biphasic inhibition curve which fits nicely with a two-site model (Ki of 0.46 and 105 nM). In Conus ermineus (Agate cone), this protein is Alpha-conotoxin EIIA.